Consider the following 133-residue polypeptide: uncharacterized protein (133 aa).

The 130-residue stretch at 1–130 folds into the FAS1 domain; sequence MPNIVEIAVS…GIIHVIDNVI (130 aa).

This is an uncharacterized protein from Synechocystis sp. (strain ATCC 27184 / PCC 6803 / Kazusa).